The sequence spans 321 residues: uncharacterized protein (321 aa).

This sequence belongs to the NAD(P)-dependent epimerase/dehydratase family.

This is an uncharacterized protein from Staphylococcus aureus (strain bovine RF122 / ET3-1).